The primary structure comprises 395 residues: Probable sugar efflux transporter (395 aa).

Helical transmembrane passes span 13–33 (VVSL…PVAL), 48–68 (VGLI…PCML), 82–102 (IFIL…YWVL), 107–127 (IGVA…VVRL), 134–154 (AQAL…GLPL), 168–188 (FVLI…LLPV), 207–227 (PALL…FTAY), 244–264 (FTTI…MLFS), 272–292 (AGFL…LLPL), 297–317 (WSLS…SLGM), 331–351 (VAMA…ALLG), and 363–383 (IGYM…FTFV).

This sequence belongs to the major facilitator superfamily. SotB (TC 2.A.1.2) family.

It is found in the cell inner membrane. In terms of biological role, involved in the efflux of sugars. The physiological role may be the reduction of the intracellular concentration of toxic sugars or sugar metabolites. This Pectobacterium atrosepticum (strain SCRI 1043 / ATCC BAA-672) (Erwinia carotovora subsp. atroseptica) protein is Probable sugar efflux transporter.